The chain runs to 216 residues: Uracil phosphoribosyltransferase (216 aa).

GTP contacts are provided by residues arginine 32, arginine 41, 75–78, and lysine 77; that span reads MGKI. At serine 82 the chain carries Phosphoserine. Residue arginine 85 participates in 5-phospho-alpha-D-ribose 1-diphosphate binding. Residue arginine 102 participates in GTP binding. Arginine 110 contacts 5-phospho-alpha-D-ribose 1-diphosphate. A GTP-binding site is contributed by arginine 131. Residues aspartate 137 and 137–145 contribute to the 5-phospho-alpha-D-ribose 1-diphosphate site; that span reads DPMLATGGS. Residue tyrosine 201 participates in D-ribose 5-phosphate binding. Residues leucine 202 and 207–209 each bind uracil; that span reads GDF. A 5-phospho-alpha-D-ribose 1-diphosphate-binding site is contributed by aspartate 208.

Belongs to the UPRTase family. Requires Mg(2+) as cofactor.

It carries out the reaction UMP + diphosphate = 5-phospho-alpha-D-ribose 1-diphosphate + uracil. Its pathway is pyrimidine metabolism; UMP biosynthesis via salvage pathway; UMP from uracil: step 1/1. Allosterically activated by GTP. Its function is as follows. Catalyzes the conversion of uracil and 5-phospho-alpha-D-ribose 1-diphosphate (PRPP) to UMP and diphosphate in the pyrimidine salvage pathway. The polypeptide is Uracil phosphoribosyltransferase (FUR1) (Saccharomyces cerevisiae (strain ATCC 204508 / S288c) (Baker's yeast)).